Reading from the N-terminus, the 156-residue chain is Probable succinate transporter subunit YjjB (156 aa).

4 consecutive transmembrane segments (helical) span residues 7–27 (WALL…AMVF), 54–74 (FGMN…IIGI), 86–106 (VFTV…TAMI), and 128–148 (FLKA…PGIW).

The protein belongs to the ThrE exporter (TC 2.A.79) family. In terms of assembly, the transporter is composed of YjjB and YjjP.

It is found in the cell inner membrane. Involved in succinate export with YjjP. Both proteins are required for export. This is Probable succinate transporter subunit YjjB from Pectobacterium atrosepticum (strain SCRI 1043 / ATCC BAA-672) (Erwinia carotovora subsp. atroseptica).